The chain runs to 236 residues: Sperm flagellar protein 1 (236 aa).

One can recognise a Calponin-homology (CH) domain in the interval 7–112 (EEALHQLYLW…VLIPLRQRLE (106 aa)). The interval 118-177 (RKQGIGSLQELAPQDGTDYMDVGLSQKARGEGVPDPQGRGQLREGRLPVPRPPGDSQALQ) is disordered. The essential for homodimerization and microtubule bundling activity stretch occupies residues 183–236 (ILQIAEKEQELLASQETVQVLQMKVRRLEHLLQLKNVRIEDLSRRLQQAERKQR).

As to quaternary structure, homodimer. Interacts with actin, TJP1, CGN and CDH1.

It localises to the cytoplasm. The protein resides in the cell projection. The protein localises to the cilium. Its subcellular location is the flagellum. It is found in the cytoskeleton. It localises to the cilium axoneme. The protein resides in the apical cell membrane. The protein localises to the basolateral cell membrane. Its subcellular location is the stress fiber. It is found in the microvillus. It localises to the lamellipodium. The protein resides in the filopodium. In terms of biological role, microtubule-associated protein involved in the stabilization of microtubules along the axis of migration during radial intercalation. Promotes the establishment and stabilization of an axis of microtubules required for the active migration of cells into the outer epithelium. Microtubule-associated protein that promotes microtubule bundling and stabilizes microtubules against depolymerization in response to cold shock. Essential for ciliary central apparatus formation which requires both its microtubule-binding and bundling activities and for ciliary localization of HYDIN and SPAG6 in ependymal cilia. Binds actin in intestinal epithelial cells (IECs), essential for IECs survival and contributes to formation of filopodia and lamellipodia in migrating IECs. Regulates planar cell polarity signaling pathway and asymmetric microtubule accumulation in ciliated epithelia. The chain is Sperm flagellar protein 1 (SPEF1) from Bos taurus (Bovine).